A 431-amino-acid polypeptide reads, in one-letter code: Enolase (431 aa).

Position 166 (glutamine 166) interacts with (2R)-2-phosphoglycerate. Residue glutamate 208 is the Proton donor of the active site. Aspartate 245, glutamate 288, and aspartate 315 together coordinate Mg(2+). Positions 340, 369, 370, and 391 each coordinate (2R)-2-phosphoglycerate. The active-site Proton acceptor is lysine 340.

The protein belongs to the enolase family. Mg(2+) serves as cofactor.

It localises to the cytoplasm. The protein resides in the secreted. Its subcellular location is the cell surface. The catalysed reaction is (2R)-2-phosphoglycerate = phosphoenolpyruvate + H2O. Its pathway is carbohydrate degradation; glycolysis; pyruvate from D-glyceraldehyde 3-phosphate: step 4/5. Catalyzes the reversible conversion of 2-phosphoglycerate (2-PG) into phosphoenolpyruvate (PEP). It is essential for the degradation of carbohydrates via glycolysis. This is Enolase from Clostridium acetobutylicum (strain ATCC 824 / DSM 792 / JCM 1419 / IAM 19013 / LMG 5710 / NBRC 13948 / NRRL B-527 / VKM B-1787 / 2291 / W).